The primary structure comprises 329 residues: NAC domain-containing protein 71 (329 aa).

In terms of domain architecture, NAC spans 9-166 (LPPGFRFHPT…DWVLCRIYNK (158 aa)). Residues 228 to 281 (RSGSADRDSMPRLHTDSSGSEHVLSPSPSPDDFPGGGDHDYAESQPSGGCGGWP) form a disordered region. Residues 230 to 242 (GSADRDSMPRLHT) show a composition bias toward basic and acidic residues.

As to quaternary structure, interacts with NAC048 and NAC002. Expressed in roots and embryo. Weakly expressed in callus.

It is found in the nucleus. Transcription activator that binds to the promoter of the stress response gene LEA19. Involved in tolerance to abiotic stresses. This is NAC domain-containing protein 71 from Oryza sativa subsp. japonica (Rice).